We begin with the raw amino-acid sequence, 590 residues long: Arginine--tRNA ligase (590 aa).

Residues 130–140 (PNIAKEMHVGH) carry the 'HIGH' region motif.

It belongs to the class-I aminoacyl-tRNA synthetase family. In terms of assembly, monomer.

It is found in the cytoplasm. It carries out the reaction tRNA(Arg) + L-arginine + ATP = L-arginyl-tRNA(Arg) + AMP + diphosphate. The protein is Arginine--tRNA ligase of Synechococcus sp. (strain CC9605).